The following is a 376-amino-acid chain: Outer membrane porin C (376 aa).

An N-terminal signal peptide occupies residues 1–21 (MKLRVLSLMVPALLVAGTAGA).

It belongs to the Gram-negative porin family. Homotrimer.

Its subcellular location is the cell outer membrane. In terms of biological role, forms pores that allow passive diffusion of small molecules across the outer membrane. This is Outer membrane porin C (ompC) from Serratia marcescens.